A 767-amino-acid polypeptide reads, in one-letter code: Cilia- and flagella-associated protein 91 (767 aa).

A disordered region spans residues 1 to 29; the sequence is MSHAVTIQEPQAQPQVSQTRYRERSRAGS. Positions 8–19 are enriched in polar residues; sequence QEPQAQPQVSQT.

It belongs to the CFAP91 family. As to quaternary structure, part of a complex containing MYCBP, AKAP1 and PRKAR2B. Interacts with MYCBP and AKAP1. Interacts with CFAP61. Phosphorylated by PKA.

The protein localises to the cytoplasm. It localises to the mitochondrion. Its subcellular location is the cytoskeleton. It is found in the cilium axoneme. In terms of biological role, involved in sperm flagellum axonemal organization and function. May regulate cilium motility through its role in the assembly of the axonemal radial spokes. The protein is Cilia- and flagella-associated protein 91 (CFAP91) of Macaca fascicularis (Crab-eating macaque).